A 67-amino-acid chain; its full sequence is MPKLKTRKAAAKRFRPTGSGKKIIRRKAFKNHLLEHKSSEQKHRRLSNLALVHEADEKNVRLMLPYM.

This sequence belongs to the bacterial ribosomal protein bL35 family.

The chain is Large ribosomal subunit protein bL35 from Synechocystis sp. (strain ATCC 27184 / PCC 6803 / Kazusa).